A 570-amino-acid polypeptide reads, in one-letter code: Urease subunit alpha (570 aa).

Positions 131–570 (GGFDSHIHFI…LPMAQRYFMY (440 aa)) constitute a Urease domain. Residues H136, H138, and K219 each coordinate Ni(2+). K219 carries the N6-carboxylysine modification. H221 lines the substrate pocket. Positions 248 and 274 each coordinate Ni(2+). H322 serves as the catalytic Proton donor. D362 contacts Ni(2+).

The protein belongs to the metallo-dependent hydrolases superfamily. Urease alpha subunit family. Heterotrimer of UreA (gamma), UreB (beta) and UreC (alpha) subunits. Three heterotrimers associate to form the active enzyme. Ni cation is required as a cofactor. In terms of processing, carboxylation allows a single lysine to coordinate two nickel ions.

Its subcellular location is the cytoplasm. It catalyses the reaction urea + 2 H2O + H(+) = hydrogencarbonate + 2 NH4(+). Its pathway is nitrogen metabolism; urea degradation; CO(2) and NH(3) from urea (urease route): step 1/1. This is Urease subunit alpha from Rhodopseudomonas palustris (strain BisB18).